An 843-amino-acid polypeptide reads, in one-letter code: MSLISAVEDRDIHNIGKTSGGGSRTSSITSSKKSLKHGSKSLRKPKVYQTTGEPLSREALYKAKLKYGVYQSPAQSYSIGVSDAHAASDKAANLAHDNQTTVEAYKRMFIDPNATKAASKMGPKVVRNNSITSATSKTSKESQTKRKSKESPGAAASKAYSMTMETTSLSSQTNSRSYSITSASSVLSGASGSFNSTVNPKPKTLNLEKVLVGAEKKAESRIKERWEPEKTNFQYGVKTDEHGNLNQFSFSNEMMNNIMAKVDAPKAQDLQKVKKVSAEKEAKSMKFALGAANAVKDMHPGADIDKSIALKAQKRETYLSQLTSQQVLTLARANVDRQLDIIEKSDMHRKLFTNMEYNKAAVAVAQSNHQKKTEFHNKINMGGGLFLSPEDITKIASGLISPVLGEVSERAEAQRAMDEEIAERTEAYNKSLNEWETMERSIISNDAKVLTTTANRHQTEKKTSQEKIKASFDALVARMDTKVAERETLLEDTKNKEIEFKKQMQQELKDEKARLDQDLEEWGKKCEQDITEARKEQEELLKPYHDDLANAEAEHKTLVEERDAINAEISRLQDAIVDHKRKISGYGNDLDAQKNRNIREDDKLLELGQTKESLESHLNDDVIILANKAKEQAELSTKEARLKQLEVDSLINERKSELNATEIELKKEKLNLLEAMKDVASARGDDKIAEEKVKKLIGMTSEEYLTQNKSVEKNVEDLPTQLEKIEEGDELKKEEIVGAETKNSGGDGVPVSTGAKEAAETSSAVQTKEPEEKISIGNKSSGKEDANDCESAEHSKEISVSQKAGNNKSLGVSPDSLEHTFSGFSQGSSIEDDQDAISNQEKK.

The interval 1 to 53 (MSLISAVEDRDIHNIGKTSGGGSRTSSITSSKKSLKHGSKSLRKPKVYQTTGE) is disordered. Position 2 is an N-acetylserine (Ser2). Phosphoserine is present on Ser2. Over residues 33–46 (KSLKHGSKSLRKPK) the composition is skewed to basic residues. Residues Ser88 and Ser130 each carry the phosphoserine modification. The interval 120 to 174 (KMGPKVVRNNSITSATSKTSKESQTKRKSKESPGAAASKAYSMTMETTSLSSQTN) is disordered. Composition is skewed to polar residues over residues 127–137 (RNNSITSATSK) and 163–174 (TMETTSLSSQTN). A phosphoserine mark is found at Ser182, Ser401, Ser584, and Ser710. The segment at 718-843 (LPTQLEKIEE…QDAISNQEKK (126 aa)) is disordered. Thr720 carries the post-translational modification Phosphothreonine. Phosphoserine occurs at positions 763 and 775. A compositionally biased stretch (basic and acidic residues) spans 781-797 (SGKEDANDCESAEHSKE). A compositionally biased stretch (polar residues) spans 798 to 810 (ISVSQKAGNNKSL). A phosphoserine mark is found at Ser816, Ser828, Ser829, and Ser838.

This sequence belongs to the EIS1 family.

It localises to the cytoplasmic granule. It is found in the cell membrane. In terms of biological role, required for normal formation of eisosomes, large cytoplasmic protein assemblies that localize to specialized domains on plasma membrane and mark the site of endocytosis. This is Eisosome protein 1 (EIS1) from Saccharomyces cerevisiae (strain YJM789) (Baker's yeast).